The primary structure comprises 168 residues: Cell division inhibitor SulA (168 aa).

A ftsZ binding region spans residues 106–112 (ALQTGNY). Residues 161 to 168 (KIHSSLYH) form a lon protease binding region.

It belongs to the SulA family. In terms of assembly, interacts with FtsZ. In terms of processing, is rapidly cleaved and degraded by the Lon protease once DNA damage is repaired.

Component of the SOS system and an inhibitor of cell division. Accumulation of SulA causes rapid cessation of cell division and the appearance of long, non-septate filaments. In the presence of GTP, binds a polymerization-competent form of FtsZ in a 1:1 ratio, thus inhibiting FtsZ polymerization and therefore preventing it from participating in the assembly of the Z ring. This mechanism prevents the premature segregation of damaged DNA to daughter cells during cell division. This chain is Cell division inhibitor SulA, found in Serratia marcescens.